The primary structure comprises 179 residues: Interleukin-10 (179 aa).

A signal peptide spans 1–19 (MPSPALLCCCLVLLAGVGA). 2 cysteine pairs are disulfide-bonded: Cys-31/Cys-127 and Cys-81/Cys-133. Asn-135 carries N-linked (GlcNAc...) asparagine glycosylation.

It belongs to the IL-10 family. As to quaternary structure, homodimer. Interacts with IL10RA and IL10RB.

Its subcellular location is the secreted. Functionally, major immune regulatory cytokine that acts on many cells of the immune system where it has profound anti-inflammatory functions, limiting excessive tissue disruption caused by inflammation. Mechanistically, IL10 binds to its heterotetrameric receptor comprising IL10RA and IL10RB leading to JAK1 and STAT2-mediated phosphorylation of STAT3. In turn, STAT3 translocates to the nucleus where it drives expression of anti-inflammatory mediators. Targets antigen-presenting cells (APCs) such as macrophages and monocytes and inhibits their release of pro-inflammatory cytokines including granulocyte-macrophage colony-stimulating factor /GM-CSF, granulocyte colony-stimulating factor/G-CSF, IL-1 alpha, IL-1 beta, IL-6, IL-8 and TNF-alpha. Also interferes with antigen presentation by reducing the expression of MHC-class II and co-stimulatory molecules, thereby inhibiting their ability to induce T cell activation. In addition, controls the inflammatory response of macrophages by reprogramming essential metabolic pathways including mTOR signaling. The sequence is that of Interleukin-10 (IL10) from Vulpes vulpes (Red fox).